A 192-amino-acid polypeptide reads, in one-letter code: Recombination protein RecR (192 aa).

A C4-type zinc finger spans residues cysteine 51–cysteine 66. The region spanning glycine 74–proline 168 is the Toprim domain.

This sequence belongs to the RecR family.

May play a role in DNA repair. It seems to be involved in an RecBC-independent recombinational process of DNA repair. It may act with RecF and RecO. This chain is Recombination protein RecR, found in Parasynechococcus marenigrum (strain WH8102).